Consider the following 214-residue polypeptide: DELTA-actitoxin-Aeq1b (214 aa).

A signal peptide spans 1–19 (MSRLIIVFIVVTMICAATA). Residues 20 to 35 (LSSKKSINEDEKDEKR) constitute a propeptide that is removed on maturation. Positions 38-47 (AVAGAVIEGA) are plays an important role in the hemolytic activity. Residues 46–65 (GATLTFNVLQTVLKALGDIS) are N-terminal region. Phosphocholine-binding residues include Ser-89, Val-122, Ser-140, Pro-142, Tyr-168, Tyr-172, and Tyr-173. The segment at 140 to 155 (SIPFDYNLYSNWWNVK) is trp-rich region, which is important for the binding to lipid membrane. The short motif at 179 to 181 (RGD) is the Cell attachment site, crucial for protein stability element.

The protein belongs to the actinoporin family. Sea anemone subfamily. Octamer or nonamer in membranes. Monomer in the soluble state.

It localises to the secreted. The protein resides in the nematocyst. It is found in the target cell membrane. Functionally, pore-forming protein that forms cations-selective hydrophilic pores of around 1 nm and causes cytolysis. Pore formation is a multi-step process that involves specific recognition of membrane sphingomyelin (but neither cholesterol nor phosphatidylcholine) using aromatic rich region and adjacent phosphocholine (POC) binding site, firm binding to the membrane (mainly driven by hydrophobic interactions) accompanied by the transfer of the N-terminal region to the lipid-water interface and finally pore formation after oligomerization of monomers. This Actinia equina (Beadlet anemone) protein is DELTA-actitoxin-Aeq1b.